We begin with the raw amino-acid sequence, 478 residues long: Solute carrier family 49 member 4 (478 aa).

The interval 1–27 (MGSGWSSEEEERQPLLGPGLGPAPGAT) is disordered. Residues 1-51 (MGSGWSSEEEERQPLLGPGLGPAPGATRRGREAAAVLPAAGPSPGRVYGRR) are Cytoplasmic-facing. Positions 15-16 (LL) match the Di-leucine motif; mediates lysosomal localization motif. The helical transmembrane segment at 52–72 (WLVLLLFSLLAFAQGLVWNTW) threads the bilayer. Residues 73 to 89 (GPIQNSARQAYSFTGWD) are Lumenal-facing. A helical membrane pass occupies residues 90 to 110 (IALLVLWGPIGFLPCFAFMWL). Over 111 to 117 (LDKRGLR) the chain is Cytoplasmic. Residues 118–138 (ITVLLTSFLMVLGTGLRCIPV) form a helical membrane-spanning segment. Residues 139 to 152 (SDLTLKKRLIHGGQ) are Lumenal-facing. A helical membrane pass occupies residues 153–173 (ILNGLAGPTVMNAAPFLSTTW). Residues 174–184 (FSADERATATA) are Cytoplasmic-facing. The helical transmembrane segment at 185–205 (IASMLSYLGGACAFLVGPLVV) threads the bilayer. The Lumenal portion of the chain corresponds to 206–229 (PAPNGTAPLLTAESSRDHIKDRIE). Asn209 is a glycosylation site (N-linked (GlcNAc...) asparagine). A helical transmembrane segment spans residues 230–250 (TVLYAEFGVVCLIFSATLAYF). The Cytoplasmic segment spans residues 251–281 (PPRPPLPPSVAAASQRLSYRRSFCRLLSNLR). The chain crosses the membrane as a helical span at residues 282–302 (FLMIALAYAIPLGVFAGWSGV). The Lumenal segment spans residues 303 to 314 (LDLILTPVHVSQ). The helical transmembrane segment at 315–335 (VDAGWIGFWSIVGGCVVGIAM) threads the bilayer. At 336-347 (ARFADFIRGMLK) the chain is on the cytoplasmic side. A helical transmembrane segment spans residues 348–368 (LILLLLFSGATLSSTWFTLTC). Topologically, residues 369–384 (LNSVTHLPLTTVTLYA) are lumenal. The chain crosses the membrane as a helical span at residues 385-405 (SCILLGVFLNSSVPIFFELFV). Residues 406–414 (ETVYPVPEG) are Cytoplasmic-facing. Residues 415 to 435 (ITCGVVTFLSNMFMGVLLFFV) form a helical membrane-spanning segment. The Lumenal portion of the chain corresponds to 436 to 442 (TFYHTEL). The chain crosses the membrane as a helical span at residues 443–463 (SWFNWCLPGSCLLSLLLILCF). At 464–478 (RESYDRLYLDVVVSV) the chain is on the cytoplasmic side.

It belongs to the major facilitator superfamily. In terms of processing, cleaved in lysosomes by cathepsin L between Leu-214 and Ala-261, generating a N-glycosylated N-terminal and a non-glycosylated C-terminal fragment.

It is found in the lysosome membrane. It catalyses the reaction pyridoxine(out) + n H(+)(out) = pyridoxine(in) + n H(+)(in). Functionally, mediates H(+)-dependent pyridoxine transport. This Rattus norvegicus (Rat) protein is Solute carrier family 49 member 4 (Slc49a4).